Consider the following 1231-residue polypeptide: Multifunctional 2-oxoglutarate metabolism enzyme (1231 aa).

The interval 1–41 is 2-oxoglutarate dehydrogenase E1, N-terminal part; that stretch reads MANISSPFGQNEWLVEEMYRKFRDDPSSVDPSWHEFLVDYS. Residues 38-79 are disordered; it reads VDYSPEPTSQPAAEPTRVTSPLVAERAAAAAPQAPPKPADTA. A linker region spans residues 42–88; the sequence is PEPTSQPAAEPTRVTSPLVAERAAAAAPQAPPKPADTAAAGNGVVAA. Over residues 58–69 the composition is skewed to low complexity; that stretch reads PLVAERAAAAAP. Positions 89–337 are succinyltransferase E2; the sequence is LAAKTAVPPP…LRTIHELLLS (249 aa). Residue His-316 is the Proton acceptor; for succinyltransferase activity of the active site. Residues 338–1231 form a 2-oxoglutarate dehydrogenase E1, C-terminal part region; that stretch reads DGFWDEVFRE…QQEILDEAFG (894 aa). Position 542 (Arg-542) interacts with thiamine diphosphate. 2-oxoglutarate is bound by residues His-581 and Ser-606. Thiamine diphosphate-binding residues include Ser-606, Leu-608, Asp-649, Ala-650, Ala-651, and Asn-682. A Mg(2+)-binding site is contributed by Asp-649. Asn-682 and Ile-684 together coordinate Mg(2+). A coiled-coil region spans residues 787-817; it reads DISMKEAEDALRDYQGQLERVFNEVRELEKH. 2-oxoglutarate is bound at residue His-1024. Thr-1042, Arg-1058, Lys-1093, Ser-1096, Gln-1146, Arg-1153, and Arg-1154 together coordinate acetyl-CoA.

The protein belongs to the 2-oxoacid dehydrogenase family. Kgd subfamily. As to quaternary structure, homodimer. The 2-oxoglutarate dehydrogenase (ODH) complex contains multiple copies of three enzymatic components: 2-oxoglutarate dehydrogenase (E1), dihydrolipoamide succinyltransferase (E2) and lipoamide dehydrogenase (E3). It depends on Mg(2+) as a cofactor. Thiamine diphosphate is required as a cofactor.

It carries out the reaction glyoxylate + 2-oxoglutarate + H(+) = 2-hydroxy-3-oxoadipate + CO2. The enzyme catalyses 2-oxoglutarate + H(+) = succinate semialdehyde + CO2. The catalysed reaction is N(6)-[(R)-lipoyl]-L-lysyl-[protein] + 2-oxoglutarate + H(+) = N(6)-[(R)-S(8)-succinyldihydrolipoyl]-L-lysyl-[protein] + CO2. It catalyses the reaction N(6)-[(R)-dihydrolipoyl]-L-lysyl-[protein] + succinyl-CoA = N(6)-[(R)-S(8)-succinyldihydrolipoyl]-L-lysyl-[protein] + CoA. It participates in carbohydrate metabolism; tricarboxylic acid cycle; succinate from 2-oxoglutarate (transferase route): step 1/2. It functions in the pathway carbohydrate metabolism; tricarboxylic acid cycle; succinyl-CoA from 2-oxoglutarate (dehydrogenase route): step 1/1. Its activity is regulated as follows. Alpha-ketoglutarate dehydrogenase and decarboxylase activities are inhibited by unphosphorylated GarA, and allosterically activated by acetyl-CoA, the main substrate of the TCA cycle. In terms of biological role, shows three enzymatic activities that share a first common step, the attack of thiamine-PP on 2-oxoglutarate (alpha-ketoglutarate, KG), leading to the formation of an enamine-thiamine-PP intermediate upon decarboxylation. Thus, displays KGD activity, catalyzing the decarboxylation from five-carbon 2-oxoglutarate to four-carbon succinate semialdehyde (SSA). Also catalyzes C-C bond formation between the activated aldehyde formed after decarboxylation of alpha-ketoglutarate and the carbonyl of glyoxylate (GLX), to yield 2-hydroxy-3-oxoadipate (HOA), which spontaneously decarboxylates to form 5-hydroxylevulinate (HLA). And is also a component of the 2-oxoglutarate dehydrogenase (ODH) complex, that catalyzes the overall conversion of 2-oxoglutarate to succinyl-CoA and CO(2). The KG decarboxylase and KG dehydrogenase reactions provide two alternative, tightly regulated, pathways connecting the oxidative and reductive branches of the TCA cycle. The protein is Multifunctional 2-oxoglutarate metabolism enzyme (kgd) of Mycobacterium tuberculosis (strain ATCC 25177 / H37Ra).